A 148-amino-acid polypeptide reads, in one-letter code: Ubiquitin conjugating enzyme E2 B (148 aa).

The UBC core domain maps to alanine 2–lysine 148. The Glycyl thioester intermediate role is filled by cysteine 87.

The protein belongs to the ubiquitin-conjugating enzyme family. In terms of assembly, interacts with mkkA (via F-box/WD40 repeat domains).

The enzyme catalyses S-ubiquitinyl-[E1 ubiquitin-activating enzyme]-L-cysteine + [E2 ubiquitin-conjugating enzyme]-L-cysteine = [E1 ubiquitin-activating enzyme]-L-cysteine + S-ubiquitinyl-[E2 ubiquitin-conjugating enzyme]-L-cysteine.. The protein operates within protein modification; protein ubiquitination. Functionally, involved in protein ubiquitination and degradation during development. Mediates protein ubiquitination at the mound and finger stage required for subsequent development and may be an essential component of the developmental transition between the induction of postaggregative gene expression and subsequent cell-type differentiation and morphogenesis. ubcB and ubpB differentially control ubiquitination/deubiquitination and degradation of mkkA protein in a cell-type-specific and temporally regulated manner. This chain is Ubiquitin conjugating enzyme E2 B (ubcB), found in Dictyostelium discoideum (Social amoeba).